The primary structure comprises 340 residues: Phosphoribosylformylglycinamidine cyclo-ligase (340 aa).

This sequence belongs to the AIR synthase family.

Its subcellular location is the cytoplasm. It catalyses the reaction 2-formamido-N(1)-(5-O-phospho-beta-D-ribosyl)acetamidine + ATP = 5-amino-1-(5-phospho-beta-D-ribosyl)imidazole + ADP + phosphate + H(+). It participates in purine metabolism; IMP biosynthesis via de novo pathway; 5-amino-1-(5-phospho-D-ribosyl)imidazole from N(2)-formyl-N(1)-(5-phospho-D-ribosyl)glycinamide: step 2/2. The protein is Phosphoribosylformylglycinamidine cyclo-ligase of Streptococcus uberis (strain ATCC BAA-854 / 0140J).